Consider the following 122-residue polypeptide: Histone H2B type 2-K1 (122 aa).

The tract at residues 1-30 is disordered; the sequence is MSAEYGQRQQPGGRGGRSSGNKKSKKRCRR. The span at 20–30 shows a compositional bias: basic residues; sequence GNKKSKKRCRR. Lys-31 is modified (N6-(2-hydroxyisobutyryl)lysine; alternate). Position 31 is an N6-(beta-hydroxybutyryl)lysine; alternate (Lys-31). Residue Lys-31 is modified to N6-crotonyllysine; alternate. At Lys-31 the chain carries N6-glutaryllysine; alternate. The residue at position 31 (Lys-31) is an N6-succinyllysine; alternate. Lys-31 participates in a covalent cross-link: Glycyl lysine isopeptide (Lys-Gly) (interchain with G-Cter in ubiquitin); alternate. The residue at position 33 (Ser-33) is a Phosphoserine. Residues Lys-40, Lys-43, and Lys-54 each carry the N6-(2-hydroxyisobutyryl)lysine; alternate modification. An N6-glutaryllysine; alternate mark is found at Lys-40 and Lys-43. The residue at position 40 (Lys-40) is an N6-lactoyllysine; alternate. Lys-43 bears the N6-methyllysine mark. N6-methyllysine; alternate is present on Lys-43. N6,N6-dimethyllysine is present on Lys-54. Lys-54 is modified (N6,N6-dimethyllysine; alternate). Residue Arg-76 is modified to Dimethylated arginine. Phosphoserine is present on Ser-81. An omega-N-methylarginine mark is found at Arg-83 and Arg-89. N6-(2-hydroxyisobutyryl)lysine; alternate is present on Lys-105. Lys-105 is modified (N6-glutaryllysine; alternate). Lys-105 carries the post-translational modification N6-lactoyllysine; alternate. Lys-105 is subject to N6-methyllysine. Lys-105 is modified (N6-methyllysine; alternate). Residue Ser-109 is glycosylated (O-linked (GlcNAc) serine). Phosphothreonine is present on Thr-112. Residues Lys-113 and Lys-117 each carry the N6-(2-hydroxyisobutyryl)lysine; alternate modification. 2 positions are modified to N6-(beta-hydroxybutyryl)lysine; alternate: Lys-113 and Lys-117. Lys-113 and Lys-117 each carry N6-glutaryllysine; alternate. 2 positions are modified to N6-succinyllysine; alternate: Lys-113 and Lys-117. Lys-113 carries the N6-lactoyllysine; alternate modification. Lys-113 carries the N6-malonyllysine; alternate modification. An N6-methylated lysine; alternate modification is found at Lys-113. Residue Lys-117 forms a Glycyl lysine isopeptide (Lys-Gly) (interchain with G-Cter in ubiquitin); alternate linkage.

Belongs to the histone H2B family. As to quaternary structure, the nucleosome is a histone octamer containing two molecules each of H2A, H2B, H3 and H4 assembled in one H3-H4 heterotetramer and two H2A-H2B heterodimers. The octamer wraps approximately 147 bp of DNA.

It is found in the chromosome. Its subcellular location is the nucleus. Functionally, core component of nucleosome. Nucleosomes wrap and compact DNA into chromatin, limiting DNA accessibility to the cellular machineries which require DNA as a template. Histones thereby play a central role in transcription regulation, DNA repair, DNA replication and chromosomal stability. DNA accessibility is regulated via a complex set of post-translational modifications of histones, also called histone code, and nucleosome remodeling. This is Histone H2B type 2-K1 from Homo sapiens (Human).